A 551-amino-acid polypeptide reads, in one-letter code: BAG family molecular chaperone regulator 8, chloroplastic (551 aa).

Positions 1–19 are enriched in basic residues; that stretch reads MASHHHHNHNHVCSRHQNH. The interval 1-46 is disordered; sequence MASHHHHNHNHVCSRHQNHHNNTPQFATSPNCCNKSNHPSPPPAED. Residues 1–52 constitute a chloroplast transit peptide; that stretch reads MASHHHHNHNHVCSRHQNHHNNTPQFATSPNCCNKSNHPSPPPAEDNLLHLV. Residues 20-38 show a composition bias toward polar residues; sequence HNNTPQFATSPNCCNKSNH. In terms of domain architecture, IQ spans 131-160; the sequence is RDSAARVIQTHFRSYLVHRSISFRQLKELA. The BAG domain occupies 147–228; it reads VHRSISFRQL…RFVQYVDDCV (82 aa). The disordered stretch occupies residues 246–281; sequence GKKPQGFGTSSEDEDNNADMSDDSEEVPVSSIDKRK. Over residues 256-271 the composition is skewed to acidic residues; that stretch reads SEDEDNNADMSDDSEE. The residue at position 332 (Ser332) is a Phosphoserine. 2 disordered regions span residues 414-433 and 450-551; these read DEGK…KGSG and NVYK…KMEP. Over residues 479 to 499 the composition is skewed to basic and acidic residues; that stretch reads GEEKGNVNEVEEIKYVPKENE. The span at 500–513 shows a compositional bias: acidic residues; sequence SFEEEEEKETDSEN. Residues 522-534 show a composition bias toward basic and acidic residues; the sequence is EGDKRVTKKEVQH.

As to quaternary structure, binds to the ATPase domain of HSP70/HSC70 chaperones.

It localises to the plastid. Its subcellular location is the chloroplast. Its function is as follows. Co-chaperone that regulates diverse cellular pathways, such as programmed cell death and stress responses. The chain is BAG family molecular chaperone regulator 8, chloroplastic (BAG1) from Arabidopsis thaliana (Mouse-ear cress).